We begin with the raw amino-acid sequence, 366 residues long: Ribosomal RNA large subunit methyltransferase M (366 aa).

S-adenosyl-L-methionine-binding positions include serine 188, 221–224, aspartate 240, aspartate 260, and aspartate 277; that span reads CPGG. The Proton acceptor role is filled by lysine 306.

The protein belongs to the class I-like SAM-binding methyltransferase superfamily. RNA methyltransferase RlmE family. RlmM subfamily. Monomer.

The protein resides in the cytoplasm. The enzyme catalyses cytidine(2498) in 23S rRNA + S-adenosyl-L-methionine = 2'-O-methylcytidine(2498) in 23S rRNA + S-adenosyl-L-homocysteine + H(+). In terms of biological role, catalyzes the 2'-O-methylation at nucleotide C2498 in 23S rRNA. This is Ribosomal RNA large subunit methyltransferase M from Shigella boydii serotype 4 (strain Sb227).